We begin with the raw amino-acid sequence, 431 residues long: tRNA(Ile)-lysidine synthase (431 aa).

19–24 contacts ATP; it reads STGIDS.

The protein belongs to the tRNA(Ile)-lysidine synthase family.

It is found in the cytoplasm. It catalyses the reaction cytidine(34) in tRNA(Ile2) + L-lysine + ATP = lysidine(34) in tRNA(Ile2) + AMP + diphosphate + H(+). Functionally, ligates lysine onto the cytidine present at position 34 of the AUA codon-specific tRNA(Ile) that contains the anticodon CAU, in an ATP-dependent manner. Cytidine is converted to lysidine, thus changing the amino acid specificity of the tRNA from methionine to isoleucine. This chain is tRNA(Ile)-lysidine synthase, found in Staphylococcus aureus (strain MW2).